The primary structure comprises 282 residues: Sirohydrochlorin cobaltochelatase CbiKC (282 aa).

Residue histidine 166 is the Proton acceptor of the active site. 2 residues coordinate Co(2+): histidine 166 and histidine 228.

It belongs to the CbiK family.

Its subcellular location is the cytoplasm. The enzyme catalyses Co-sirohydrochlorin + 2 H(+) = sirohydrochlorin + Co(2+). It carries out the reaction siroheme + 2 H(+) = sirohydrochlorin + Fe(2+). The protein operates within cofactor biosynthesis; adenosylcobalamin biosynthesis; cob(II)yrinate a,c-diamide from sirohydrochlorin (anaerobic route): step 1/10. It participates in porphyrin-containing compound metabolism; siroheme biosynthesis; siroheme from sirohydrochlorin: step 1/1. In terms of biological role, catalyzes the insertion of Co(2+) into sirohydrochlorin as part of the anaerobic pathway to cobalamin biosynthesis. To a lesser extent, is also able to insert Fe(2+) into sirohydrochlorin, yielding siroheme. The chain is Sirohydrochlorin cobaltochelatase CbiKC (cbiKc) from Nitratidesulfovibrio vulgaris (strain ATCC 29579 / DSM 644 / CCUG 34227 / NCIMB 8303 / VKM B-1760 / Hildenborough) (Desulfovibrio vulgaris).